The chain runs to 148 residues: Small ribosomal subunit protein eS6 (148 aa).

This sequence belongs to the eukaryotic ribosomal protein eS6 family.

The chain is Small ribosomal subunit protein eS6 from Pyrobaculum neutrophilum (strain DSM 2338 / JCM 9278 / NBRC 100436 / V24Sta) (Thermoproteus neutrophilus).